Here is a 65-residue protein sequence, read N- to C-terminus: Large ribosomal subunit protein bL31 (65 aa).

Zn(2+) is bound by residues cysteine 16, cysteine 18, cysteine 36, and cysteine 39.

It belongs to the bacterial ribosomal protein bL31 family. Type A subfamily. As to quaternary structure, part of the 50S ribosomal subunit. It depends on Zn(2+) as a cofactor.

Its function is as follows. Binds the 23S rRNA. In Carboxydothermus hydrogenoformans (strain ATCC BAA-161 / DSM 6008 / Z-2901), this protein is Large ribosomal subunit protein bL31.